The sequence spans 678 residues: MHSHRQKWGRQTDIARVLDDIEHDLYLPQRLSLDGATGTDESHVQYGIVKDCSVLTCGCCISESLFNDLCRETSNKQTACPICQRENVRLLSAIKPLRDLARQIDFFRSTTGQGESESDELPAIVKTSPSSSSLSLTPSRSSSTAGLEADNKTLSDPTVKEKSSLLELFHIVASKMHNANTEVGSDHPLTTGTTRDQEEHTTKENYSSSLLEPNYDDHANWKILDNASNTRTVPIDNNFSLMSTDVTIPSTANYQTNSAHDLDEEKEYFFANCFPMYRKKFQFNTHPKFLGTKSKLFINQSISPDCTKFALITEHKWEIYSINPKDNSPQLVSCGKSSGEYGPNFNQLTEQSSSSLSTTSQASKKKKKNWSQRFCKLSNDFLIISGSQNILNVHDIHQNGKLIYTYVSRFPIRCIDIDPRSQIIAYGITGKDRHTGAEQALVVIQQITRNKVTLEPEFPPPITITLPYRDPINTIQLSHDAKYLTCSTALESRFLIISLQKINEPRLIMKSVRSIDTSLESEGITDTKLFPGNPNLMCITSTAFNSSPLVINTKITQINGVRTVAQPSMLIRVDEIGCKIHKCEISPRNDAIAFLDRNGSVYIMCAPTMMDNNEKRRTILVETVANAYRAYESATLRFNPEGNKLYILDRKGTFFVEDFAYGLPQSREITKCKQIFHK.

Disordered stretches follow at residues 111–158 and 179–211; these read TGQG…SDPT and ANTE…SSLL. The segment covering 127 to 144 has biased composition (low complexity); the sequence is TSPSSSSLSLTPSRSSST. A compositionally biased stretch (basic and acidic residues) spans 149-158; that stretch reads ADNKTLSDPT. The span at 179 to 194 shows a compositional bias: polar residues; that stretch reads ANTEVGSDHPLTTGTT.

As to quaternary structure, homodimer. Component of the plasma membrane SPS (SSY1-PTR3-SSY5) amino acid sensor complex. Interacts directly with SSY1 and SSY5. In terms of processing, hyperphosphorylated in response to extracellular amino acids and dependent on the amino acid sensor component SSY1. Phosphorylation is positively regulated by casein kinases YCK1 and YCK2, and negatively regulated by phosphatase PP2A regulatory subunit RTS1.

It is found in the cell membrane. Its function is as follows. Component of the SPS-sensor system, which regulates the expression of several amino acid-metabolizing enzymes and amino acid- and peptide-permeases in response to extracellular amino acid levels by controlling the activity of two transcription factors, STP1 and STP2. The polypeptide is SPS-sensor component PTR3 (PTR3) (Saccharomyces cerevisiae (strain ATCC 204508 / S288c) (Baker's yeast)).